The chain runs to 162 residues: Beta-lactoglobulin-1 (162 aa).

Intrachain disulfides connect Cys-66-Cys-160 and Cys-106-Cys-119.

Belongs to the calycin superfamily. Lipocalin family. As to quaternary structure, monomer.

Its subcellular location is the secreted. In terms of biological role, lactoglobulin is the primary component of whey, it binds retinol and is probably involved in the transport of that molecule. This is Beta-lactoglobulin-1 (LGB1) from Felis catus (Cat).